Here is a 300-residue protein sequence, read N- to C-terminus: N-acetylmannosamine kinase (300 aa).

Residues 5–12 and 132–139 contribute to the ATP site; these read ALDIGGTK and GVGGGIVL. Zn(2+) contacts are provided by H156, C166, C168, and C173.

This sequence belongs to the ROK (NagC/XylR) family. NanK subfamily. In terms of assembly, homodimer.

The catalysed reaction is an N-acyl-D-mannosamine + ATP = an N-acyl-D-mannosamine 6-phosphate + ADP + H(+). It functions in the pathway amino-sugar metabolism; N-acetylneuraminate degradation; D-fructose 6-phosphate from N-acetylneuraminate: step 2/5. Its function is as follows. Catalyzes the phosphorylation of N-acetylmannosamine (ManNAc) to ManNAc-6-P. The protein is N-acetylmannosamine kinase (nanK) of Haemophilus influenzae (strain ATCC 51907 / DSM 11121 / KW20 / Rd).